The chain runs to 591 residues: Autotransporter adhesin NhhA (591 aa).

Positions 1–51 (MNKIYRIIWNSALNAWVVVSELTRNHTKRASATVKTAVLATLLFATVQASA) are cleaved as a signal peptide. The segment at 52–503 (NNEEQEEDLY…TNVAQLKGVA (452 aa)) is surface exposed passenger domain. Positions 504-591 (QNLNNRIDNV…GASASVGYQW (88 aa)) are translocator domain. 4 beta stranded membrane passes run 537-547 (GKSMMAIGGGT), 551-561 (EAGYAIGYSSI), 570-576 (KGTASGN), and 580-591 (HFGASASVGYQW).

The protein belongs to the autotransporter-2 (AT-2) (TC 1.B.40) family. Homotrimer.

The protein resides in the cell surface. Its subcellular location is the cell outer membrane. Involved in adhesion of capsulated meningococci to host epithelial cells. Interacts with laminin and heparan sulfate, promoting the adherence to the extracellular matrix (ECM) components. The chain is Autotransporter adhesin NhhA from Neisseria meningitidis serogroup B (strain ATCC BAA-335 / MC58).